The sequence spans 113 residues: Putative membrane protein insertion efficiency factor (113 aa).

The protein belongs to the UPF0161 family.

It localises to the cell inner membrane. Could be involved in insertion of integral membrane proteins into the membrane. The protein is Putative membrane protein insertion efficiency factor of Campylobacter jejuni subsp. jejuni serotype O:23/36 (strain 81-176).